The primary structure comprises 142 residues: Holo-[acyl-carrier-protein] synthase (142 aa).

Mg(2+) contacts are provided by Asp-9 and Glu-63.

It belongs to the P-Pant transferase superfamily. AcpS family. It depends on Mg(2+) as a cofactor.

Its subcellular location is the cytoplasm. It catalyses the reaction apo-[ACP] + CoA = holo-[ACP] + adenosine 3',5'-bisphosphate + H(+). Its function is as follows. Transfers the 4'-phosphopantetheine moiety from coenzyme A to a Ser of acyl-carrier-protein. This chain is Holo-[acyl-carrier-protein] synthase, found in Burkholderia lata (strain ATCC 17760 / DSM 23089 / LMG 22485 / NCIMB 9086 / R18194 / 383).